The following is a 471-amino-acid chain: Glutamate--tRNA ligase (471 aa).

The 'HIGH' region signature appears at 9–19; sequence PSPTGYLHVGG. Residues cysteine 98, cysteine 100, cysteine 125, and aspartate 127 each contribute to the Zn(2+) site. The short motif at 237–241 is the 'KMSKS' region element; sequence KLSKR. Residue lysine 240 participates in ATP binding.

The protein belongs to the class-I aminoacyl-tRNA synthetase family. Glutamate--tRNA ligase type 1 subfamily. In terms of assembly, monomer. Requires Zn(2+) as cofactor.

It localises to the cytoplasm. It catalyses the reaction tRNA(Glu) + L-glutamate + ATP = L-glutamyl-tRNA(Glu) + AMP + diphosphate. In terms of biological role, catalyzes the attachment of glutamate to tRNA(Glu) in a two-step reaction: glutamate is first activated by ATP to form Glu-AMP and then transferred to the acceptor end of tRNA(Glu). The sequence is that of Glutamate--tRNA ligase from Yersinia pseudotuberculosis serotype IB (strain PB1/+).